The chain runs to 366 residues: Protein FAM131A (366 aa).

Positions 342–366 (QRQASDLASSGVVSLDEDEAEPEEQ) are disordered. Acidic residues predominate over residues 356 to 366 (LDEDEAEPEEQ).

Belongs to the FAM131 family.

This chain is Protein FAM131A (FAM131A), found in Homo sapiens (Human).